The following is a 344-amino-acid chain: Lipase chaperone (344 aa).

The helical transmembrane segment at 14-34 threads the bilayer; sequence AMVYGVVGLAAIAGVAMWSGA.

It belongs to the lipase chaperone family.

It localises to the cell inner membrane. Its function is as follows. May be involved in the folding of the extracellular lipase during its passage through the periplasm. The polypeptide is Lipase chaperone (Burkholderia lata (strain ATCC 17760 / DSM 23089 / LMG 22485 / NCIMB 9086 / R18194 / 383)).